Reading from the N-terminus, the 358-residue chain is Alanine racemase (358 aa).

Catalysis depends on lysine 35, which acts as the Proton acceptor; specific for D-alanine. Lysine 35 is subject to N6-(pyridoxal phosphate)lysine. Arginine 130 serves as a coordination point for substrate. Tyrosine 255 acts as the Proton acceptor; specific for L-alanine in catalysis. A substrate-binding site is contributed by methionine 303.

This sequence belongs to the alanine racemase family. Pyridoxal 5'-phosphate is required as a cofactor.

It catalyses the reaction L-alanine = D-alanine. The protein operates within amino-acid biosynthesis; D-alanine biosynthesis; D-alanine from L-alanine: step 1/1. Catalyzes the interconversion of L-alanine and D-alanine. May also act on other amino acids. This is Alanine racemase (alr) from Shewanella baltica (strain OS195).